Consider the following 486-residue polypeptide: Kynureninase 1 (486 aa).

The segment at 53–72 (DLKRTTLDPNQEPEHSPTPS) is disordered. Pyridoxal 5'-phosphate contacts are provided by residues Leu146, Thr147, 174–177 (FPSD), Ser231, Asp260, His263, and Tyr285. Lys286 carries the post-translational modification N6-(pyridoxal phosphate)lysine. The pyridoxal 5'-phosphate site is built by Trp326 and Asn354.

It belongs to the kynureninase family. Homodimer. Requires pyridoxal 5'-phosphate as cofactor.

Its subcellular location is the cytoplasm. The enzyme catalyses L-kynurenine + H2O = anthranilate + L-alanine + H(+). The catalysed reaction is 3-hydroxy-L-kynurenine + H2O = 3-hydroxyanthranilate + L-alanine + H(+). It participates in amino-acid degradation; L-kynurenine degradation; L-alanine and anthranilate from L-kynurenine: step 1/1. The protein operates within cofactor biosynthesis; NAD(+) biosynthesis; quinolinate from L-kynurenine: step 2/3. Functionally, catalyzes the cleavage of L-kynurenine (L-Kyn) and L-3-hydroxykynurenine (L-3OHKyn) into anthranilic acid (AA) and 3-hydroxyanthranilic acid (3-OHAA), respectively. In Aspergillus clavatus (strain ATCC 1007 / CBS 513.65 / DSM 816 / NCTC 3887 / NRRL 1 / QM 1276 / 107), this protein is Kynureninase 1 (bna5-1).